Here is a 68-residue protein sequence, read N- to C-terminus: Alpha-conotoxin-like Lt1.2 (68 aa).

Positions 1–21 (MGMRMMFIMFMLVVLATTVDT) are cleaved as a signal peptide. Residues 22–48 (FTSDRALDAMNAAASNKASRLIALAVR) constitute a propeptide that is removed on maturation. Intrachain disulfides connect Cys-50–Cys-56 and Cys-51–Cys-64. Residues 52–54 (ARA) form a lacks the Ser-Xaa-Pro motif that is crucial for potent interaction with nAChR region. At Gly-65 the chain carries Glycine amide.

It belongs to the conotoxin A superfamily. Expressed by the venom duct.

The protein localises to the secreted. Functionally, alpha-conotoxins act on postsynaptic membranes, they bind to the nicotinic acetylcholine receptors (nAChR) and thus inhibit them. Has a distinct nAChR binding mode from other alpha-conotoxins, due to a different three residue motif (Ala-Xaa-Ala instead of the conserved Ser-Xaa-Pro motif). The polypeptide is Alpha-conotoxin-like Lt1.2 (Conus litteratus (Lettered cone)).